The chain runs to 692 residues: MSSIKGNKLEEQGPRPLQPTPGLMEGNKLEEQDSSPPQSTPGLMKGDKREEQGLGPEPAAPQQPTAEEEALIEFHRSYRELFEFFCNNTTIHGAIRLVCSQHNRMKTAFWAVLWLCTFGMMYWQFGLLFGEYFSYPVSLNINLNSDKLVFPAVTICTLNPYRYPEIKEELEELDRITEQTLFDLYKYSSFTTLVAGSRSRRDLRGTLPHPLQRLRVPPPPHGARRARSVASSVRDNNPQVDWKDWKIGFQLCNQNKSDCFYQTYSSGVDAVREWYRFHYINILSRLPETLPSLEKDTLGNFIFACRFNQVSCNQANYSHFHHPMYGNCYTFNDKNNSNLWMSSMPGINNGLSLMLRAEQNDFIPLLSTVTGARVMVHGQDEPAFMDDGGFNLRPGVETSISMRKETLDRLGGDYGDCTKNGSDVPVENLYPSKYTQQVCIHSCFQESMIKECGCAYIFYPRPQNVEYCDYRKHSSWGYCYYKLQVDFSSDHLGCFTKCRKPCSVTSYQLSAGYSRWPSVTSQEWVFQMLSRQNNYTVNNKRNGVAKVNIFFKELNYKTNSESPSVTMVTLLSNLGSQWSLWFGSSVLSVVEMAELIFDLLVITFLMLLRRFRSRYWSPGRGGRGAQEVASTLASSPPSHFCPHPTSLSLSQPGPAPSPALTAPPPAYATLGPRPSPGGSTGAGSSACPLGGP.

Positions 1 to 67 (MSSIKGNKLE…PAAPQQPTAE (67 aa)) are disordered. At 1 to 108 (MSSIKGNKLE…CSQHNRMKTA (108 aa)) the chain is on the cytoplasmic side. The span at 56 to 65 (PEPAAPQQPT) shows a compositional bias: low complexity. The helical transmembrane segment at 109–129 (FWAVLWLCTFGMMYWQFGLLF) threads the bilayer. The Extracellular portion of the chain corresponds to 130 to 585 (GEYFSYPVSL…SQWSLWFGSS (456 aa)). 10 cysteine pairs are disulfide-bonded: C156-C328, C252-C259, C305-C312, C417-C502, C439-C479, C439-C498, C443-C494, C452-C479, C452-C502, and C454-C468. A gating release of inhibition by proteolysis (GRIP); protease-sensitive region that is responsible for the proteolytic activation of the channel region spans residues 198–266 (RSRRDLRGTL…SDCFYQTYSS (69 aa)). The chain crosses the membrane as a helical span at residues 586 to 606 (VLSVVEMAELIFDLLVITFLM). Topologically, residues 607 to 692 (LLRRFRSRYW…GSSACPLGGP (86 aa)) are cytoplasmic. A disordered region spans residues 627–692 (EVASTLASSP…GSSACPLGGP (66 aa)). Residues 628–637 (VASTLASSPP) show a composition bias toward polar residues. The span at 653-666 (GPAPSPALTAPPPA) shows a compositional bias: pro residues. The PY motif; recruits WW domain-containing proteins and is thereby required for ubiquitination and inhibition of the channel by NEDD4 and NEDD4L signature appears at 663-667 (PPPAY). The span at 682–692 (AGSSACPLGGP) shows a compositional bias: low complexity.

The protein belongs to the amiloride-sensitive sodium channel (TC 1.A.6) family. SCNN1A subfamily. In terms of assembly, heterotrimer; containing an alpha/SCNN1A, a beta/SCNN1B and a gamma/SCNN1G subunit. Interacts with WWP1 (via WW domains). Interacts with WWP2 (via WW domains); inhibits the channel. Interacts with BPIFA1; the interaction is indirect via SCNN1B and inhibits the proteolytic processing of SCNN1A and SCNN1G and the activation of ENaC. Interacts with the full-length immature form of PCSK9 (pro-PCSK9). Post-translationally, ubiquitinated. Can be ubiquitinated at multiple sites and undergo monoubiquitination and polyubiquitination. Ubiquitination by NEDD4 or NEDD4L inhibits the ENaC channel through endocytosis, intracellular retention and degradation of its individual subunits. In terms of processing, N-glycosylated. ENaC is activated through the proteolytic maturation of its subunits. Furin cleaves the SCNN1A subunit, which results in a stepwise increase in the open probability of the channel due to the release of an inhibitory tract. BPIFA1, which is recruited by the SCNN1B subunit, prevents the proteolytic activation of ENaC.

The protein localises to the apical cell membrane. It localises to the cell projection. Its subcellular location is the cilium. The protein resides in the cytoplasmic granule. It is found in the cytoplasm. The protein localises to the cytoplasmic vesicle. It localises to the secretory vesicle. Its subcellular location is the acrosome. The protein resides in the flagellum. The enzyme catalyses Na(+)(in) = Na(+)(out). With respect to regulation, originally identified and characterized by its inhibition by the diuretic drug amiloride. Functionally, this is one of the three pore-forming subunits of the heterotrimeric epithelial sodium channel (ENaC), a critical regulator of sodium balance and fluid homeostasis. ENaC operates in epithelial tissues, where it mediates the electrodiffusion of sodium ions from extracellular fluid through the apical membrane of cells, with water following osmotically. It plays a key role in maintaining sodium homeostasis through electrogenic sodium reabsorption in the kidneys. Additionally, ENaC is essential for airway surface liquid homeostasis, which is crucial for proper mucus clearance. This is Epithelial sodium channel subunit alpha from Pan troglodytes (Chimpanzee).